The primary structure comprises 335 residues: tRNA N6-adenosine threonylcarbamoyltransferase (335 aa).

A divalent metal cation-binding residues include H109, H113, and Y130. Substrate contacts are provided by residues 130-134 (YVSGG), D162, G177, E181, and N266. Residue D294 coordinates a divalent metal cation.

The protein belongs to the KAE1 / TsaD family. As to quaternary structure, component of the EKC/KEOPS complex composed of at least tp53rk, tprkb, osgep and lage3; the whole complex dimerizes. A divalent metal cation is required as a cofactor.

The protein localises to the cytoplasm. The protein resides in the nucleus. The catalysed reaction is L-threonylcarbamoyladenylate + adenosine(37) in tRNA = N(6)-L-threonylcarbamoyladenosine(37) in tRNA + AMP + H(+). In terms of biological role, component of the EKC/KEOPS complex that is required for the formation of a threonylcarbamoyl group on adenosine at position 37 (t(6)A37) in tRNAs that read codons beginning with adenine. The complex is probably involved in the transfer of the threonylcarbamoyl moiety of threonylcarbamoyl-AMP (TC-AMP) to the N6 group of A37. Osgep likely plays a direct catalytic role in this reaction, but requires other protein(s) of the complex to fulfill this activity. The polypeptide is tRNA N6-adenosine threonylcarbamoyltransferase (Xenopus laevis (African clawed frog)).